The primary structure comprises 291 residues: N-acetylmannosamine kinase (291 aa).

Residues 5 to 12 (AIDIGGTK) and 132 to 139 (GVGGGVVS) each bind ATP. Histidine 156, cysteine 166, cysteine 168, and cysteine 173 together coordinate Zn(2+).

Belongs to the ROK (NagC/XylR) family. NanK subfamily. In terms of assembly, homodimer.

It carries out the reaction an N-acyl-D-mannosamine + ATP = an N-acyl-D-mannosamine 6-phosphate + ADP + H(+). Its pathway is amino-sugar metabolism; N-acetylneuraminate degradation; D-fructose 6-phosphate from N-acetylneuraminate: step 2/5. Its function is as follows. Catalyzes the phosphorylation of N-acetylmannosamine (ManNAc) to ManNAc-6-P. This is N-acetylmannosamine kinase from Escherichia coli O139:H28 (strain E24377A / ETEC).